Reading from the N-terminus, the 173-residue chain is Placenta-specific protein 1 (173 aa).

The signal sequence occupies residues 1–23 (MKLIKFLGGVVFFTLMFSGYSEQ).

This sequence belongs to the PLAC1 family.

It is found in the secreted. May play a role in placental development. In Rattus norvegicus (Rat), this protein is Placenta-specific protein 1.